Here is a 148-residue protein sequence, read N- to C-terminus: ATP synthase epsilon chain (148 aa).

Belongs to the ATPase epsilon chain family. In terms of assembly, F-type ATPases have 2 components, CF(1) - the catalytic core - and CF(0) - the membrane proton channel. CF(1) has five subunits: alpha(3), beta(3), gamma(1), delta(1), epsilon(1). CF(0) has three main subunits: a, b and c.

Its subcellular location is the cell membrane. Its function is as follows. Produces ATP from ADP in the presence of a proton gradient across the membrane. This is ATP synthase epsilon chain from Streptococcus thermophilus (strain ATCC BAA-491 / LMD-9).